The primary structure comprises 60 residues: Large ribosomal subunit protein bL32A (60 aa).

Over residues 1-19 the composition is skewed to basic residues; it reads MAVPKRRMSRSNTRSRRSQ. Positions 1-21 are disordered; the sequence is MAVPKRRMSRSNTRSRRSQWK.

The protein belongs to the bacterial ribosomal protein bL32 family.

The polypeptide is Large ribosomal subunit protein bL32A (Nocardia farcinica (strain IFM 10152)).